Reading from the N-terminus, the 306-residue chain is Ornithine carbamoyltransferase, anabolic (306 aa).

Carbamoyl phosphate contacts are provided by residues 46–49 (STRT), Gln-73, Arg-97, and 124–127 (HPTQ). L-ornithine contacts are provided by residues Asn-156, Asp-220, and 224–225 (SM). Carbamoyl phosphate is bound by residues 260-261 (CL) and Arg-288.

Belongs to the aspartate/ornithine carbamoyltransferase superfamily. OTCase family. As to quaternary structure, homohexamer; dimer of trimers.

It localises to the cytoplasm. It carries out the reaction carbamoyl phosphate + L-ornithine = L-citrulline + phosphate + H(+). The protein operates within amino-acid biosynthesis; L-arginine biosynthesis; L-arginine from L-ornithine and carbamoyl phosphate: step 1/3. Functionally, reversibly catalyzes the transfer of the carbamoyl group from carbamoyl phosphate (CP) to the N(epsilon) atom of ornithine (ORN) to produce L-citrulline, which is a substrate for argininosuccinate synthetase (ArgG) involved in the final step in arginine biosynthesis. The sequence is that of Ornithine carbamoyltransferase, anabolic from Campylobacter jejuni subsp. jejuni serotype O:2 (strain ATCC 700819 / NCTC 11168).